The primary structure comprises 402 residues: MKRFLKAWRKTSLIKKITIGVVIGLFLGILVPKASAIGLLGQLFVGGLKAIAPLLVFTLVISALSQHREGGKTNMSTIIGLYITATFAAALIAVVVNYIFPLTLILKTPAKTDLLPPKGISEVFQSLLLKIVDNPIHAITEANYMSILFWAVIFGLAMRSSNQRTKDLMQTFADATSQVVKWIINLAPIGIMGLVFTSISENGIGILGDYGLLILVLVGTMLFVALVVNPIIAFVMMRKNPYPLVLRCLKDSGITAFFTRSSAANIPVNMRLCEDLGLDKDTYSVSIPLGAAINMAGAAITINILTLAAVNTLGITVDFPTAFLLSVVAAVSACGASGVTGGSLLLIPVACSLFGISNDVAMQVVGVGFIVGVIQDSCETALNSSTDVLFTAVAEKSVFGKK.

The next 9 helical transmembrane spans lie at 19–39 (IGVV…AIGL), 43–63 (LFVG…VISA), 86–106 (TFAA…TLIL), 138–158 (AITE…GLAM), 179–199 (VVKW…FTSI), 212–232 (LLIL…NPII), 287–307 (IPLG…ILTL), 327–347 (VVAA…LLLI), and 354–374 (FGIS…VGVI).

Belongs to the dicarboxylate/amino acid:cation symporter (DAACS) (TC 2.A.23) family.

It is found in the cell membrane. It carries out the reaction L-serine(in) + Na(+)(in) = L-serine(out) + Na(+)(out). The enzyme catalyses L-threonine(in) + Na(+)(in) = L-threonine(out) + Na(+)(out). In terms of biological role, involved in the import of serine and threonine into the cell, with the concomitant import of sodium (symport system). This Streptococcus agalactiae serotype Ia (strain ATCC 27591 / A909 / CDC SS700) protein is Serine/threonine transporter SstT.